The sequence spans 320 residues: Reticulocalbin-2 (320 aa).

The first 25 residues, 1–25 (MRLGPRPAVLGLLLLLLLYAAVAGA), serve as a signal peptide directing secretion. EF-hand domains are found at residues 64–99 (EQQR…SFKH) and 100–135 (YAMQ…RVID). Ca(2+)-binding residues include D77, D79, D81, E88, D113, N115, D117, T119, and E124. Position 140 is a phosphothreonine (T140). 4 EF-hand domains span residues 150-185 (FRQL…HPEE), 189-224 (MTEF…DPTA), 230-265 (WILV…NNQG), and 266-301 (IAQE…FLTS). Residues D167, E176, D202, N204, D206, E213, D243, D245, D247, R249, E254, D279, N281, D283, K285, and E290 each contribute to the Ca(2+) site. Positions 317 to 320 (HDEL) match the Prevents secretion from ER motif.

It belongs to the CREC family. In terms of assembly, binds the snake venom phospholipase complex taipoxin. As to expression, ubiquitous.

Its subcellular location is the endoplasmic reticulum lumen. Not known. Binds calcium. In Rattus norvegicus (Rat), this protein is Reticulocalbin-2 (Rcn2).